A 27-amino-acid polypeptide reads, in one-letter code: MQLFHLCLIISCSCPTVQASKLCLGWL.

This Hepatitis B virus genotype C subtype ayw (isolate Australia/AustRC/1992) (HBV-C) protein is Truncated HBeAg protein (C).